Consider the following 312-residue polypeptide: Porphobilinogen deaminase (312 aa).

C243 bears the S-(dipyrrolylmethanemethyl)cysteine mark.

The protein belongs to the HMBS family. In terms of assembly, monomer. Dipyrromethane serves as cofactor.

It catalyses the reaction 4 porphobilinogen + H2O = hydroxymethylbilane + 4 NH4(+). The protein operates within porphyrin-containing compound metabolism; protoporphyrin-IX biosynthesis; coproporphyrinogen-III from 5-aminolevulinate: step 2/4. Functionally, tetrapolymerization of the monopyrrole PBG into the hydroxymethylbilane pre-uroporphyrinogen in several discrete steps. This chain is Porphobilinogen deaminase, found in Vibrio campbellii (strain ATCC BAA-1116).